The primary structure comprises 115 residues: Somatostatin-1 (115 aa).

Residues 1 to 24 (MLSCRFQCALVLLSLAVVFSKVSA) form the signal peptide. Positions 25–88 (APSDLRLRQL…QDEVRLELDR (64 aa)) are excised as a propeptide. Positions 65 to 95 (NDALDSSDLSRGADQDEVRLELDRSANSSPL) are disordered. Residues 75–88 (RGADQDEVRLELDR) are compositionally biased toward basic and acidic residues. A disulfide bridge links Cys-104 with Cys-115.

It belongs to the somatostatin family.

It is found in the secreted. Somatostatin inhibits the release of somatotropin. This Protopterus annectens (African lungfish) protein is Somatostatin-1 (sst1).